A 256-amino-acid polypeptide reads, in one-letter code: Protein FixA (256 aa).

The protein belongs to the ETF beta-subunit/FixA family. As to quaternary structure, heterodimer of FixA and FixB.

Its pathway is amine and polyamine metabolism; carnitine metabolism. Required for anaerobic carnitine reduction. May bring reductant to CaiA. This is Protein FixA from Escherichia coli O7:K1 (strain IAI39 / ExPEC).